The following is a 217-amino-acid chain: Large ribosomal subunit protein uL1 (217 aa).

Ser-2 bears the N-acetylserine mark. Tyr-11 carries the phosphotyrosine modification. N6-acetyllysine is present on residues Lys-91 and Lys-106. N6-acetyllysine; alternate is present on Lys-118. Lys-118 participates in a covalent cross-link: Glycyl lysine isopeptide (Lys-Gly) (interchain with G-Cter in SUMO1); alternate. Residue Lys-118 forms a Glycyl lysine isopeptide (Lys-Gly) (interchain with G-Cter in SUMO2); alternate linkage. Lys-161 is covalently cross-linked (Glycyl lysine isopeptide (Lys-Gly) (interchain with G-Cter in SUMO2)).

The protein belongs to the universal ribosomal protein uL1 family. In terms of assembly, component of the large ribosomal subunit.

Its subcellular location is the cytoplasm. In terms of biological role, component of the large ribosomal subunit. The ribosome is a large ribonucleoprotein complex responsible for the synthesis of proteins in the cell. This Bos taurus (Bovine) protein is Large ribosomal subunit protein uL1 (RPL10A).